A 123-amino-acid chain; its full sequence is Small ribosomal subunit protein eS8 (123 aa).

Positions 1–37 (MKDQGRSTRKRTGGRLKHASNKKRHQLGREPAETTVG) are disordered. The span at 7 to 26 (STRKRTGGRLKHASNKKRHQ) shows a compositional bias: basic residues.

The protein belongs to the eukaryotic ribosomal protein eS8 family. As to quaternary structure, part of the 30S ribosomal subunit.

In Halorubrum lacusprofundi (strain ATCC 49239 / DSM 5036 / JCM 8891 / ACAM 34), this protein is Small ribosomal subunit protein eS8.